The chain runs to 474 residues: tRNA-2-methylthio-N(6)-dimethylallyladenosine synthase (474 aa).

Residues 3–120 form the MTTase N-terminal domain; that stretch reads KKLLIKTWGC…LPEMIKQSQT (118 aa). Residues Cys-12, Cys-49, Cys-83, Cys-157, Cys-161, and Cys-164 each contribute to the [4Fe-4S] cluster site. The Radical SAM core domain maps to 143–375; the sequence is RAEGATAFVS…QQTINAQAMR (233 aa). In terms of domain architecture, TRAM spans 378-441; sequence RLMLATEQRV…ANSLRGELVR (64 aa).

This sequence belongs to the methylthiotransferase family. MiaB subfamily. Monomer. [4Fe-4S] cluster serves as cofactor.

Its subcellular location is the cytoplasm. The enzyme catalyses N(6)-dimethylallyladenosine(37) in tRNA + (sulfur carrier)-SH + AH2 + 2 S-adenosyl-L-methionine = 2-methylsulfanyl-N(6)-dimethylallyladenosine(37) in tRNA + (sulfur carrier)-H + 5'-deoxyadenosine + L-methionine + A + S-adenosyl-L-homocysteine + 2 H(+). Catalyzes the methylthiolation of N6-(dimethylallyl)adenosine (i(6)A), leading to the formation of 2-methylthio-N6-(dimethylallyl)adenosine (ms(2)i(6)A) at position 37 in tRNAs that read codons beginning with uridine. The chain is tRNA-2-methylthio-N(6)-dimethylallyladenosine synthase from Vibrio parahaemolyticus serotype O3:K6 (strain RIMD 2210633).